The chain runs to 394 residues: Mitogen-activated protein kinase 2 (394 aa).

The segment covering 1 to 10 (MDGPAQQTDT) has biased composition (polar residues). The disordered stretch occupies residues 1–27 (MDGPAQQTDTVMAEAAAAQQPAPPSQP). A Protein kinase domain is found at 61-346 (KPPIMPIGKG…VEDALAHPYL (286 aa)). Residues 67–75 (IGKGAYGIV) and Lys90 each bind ATP. The active-site Proton acceptor is the Asp187. Thr219 is subject to Phosphothreonine. Residues 219 to 221 (TEY) carry the TXY motif. Phosphotyrosine is present on Tyr221. Thr224 is subject to Phosphothreonine.

The protein belongs to the protein kinase superfamily. CMGC Ser/Thr protein kinase family. MAP kinase subfamily. Requires Mg(2+) as cofactor. In terms of processing, activated by cold, wounding and UV-C in a cultivar-dependent manner; phosphorylated at Tyr-221 in cv. Subicho but not in cv. Pungchon. Expressed constitutively in roots, stems, flowers and fruits of the hot pepper (cv. Subicho).

The catalysed reaction is L-seryl-[protein] + ATP = O-phospho-L-seryl-[protein] + ADP + H(+). It carries out the reaction L-threonyl-[protein] + ATP = O-phospho-L-threonyl-[protein] + ADP + H(+). Activated by threonine and tyrosine phosphorylation. In terms of biological role, protein kinase involved in oxidative stress-mediated and innate immune MAP kinase signaling cascades. The chain is Mitogen-activated protein kinase 2 from Capsicum annuum (Capsicum pepper).